Reading from the N-terminus, the 130-residue chain is Small ribosomal subunit protein uS8 (130 aa).

This sequence belongs to the universal ribosomal protein uS8 family. Part of the 30S ribosomal subunit. Contacts proteins S5 and S12.

Functionally, one of the primary rRNA binding proteins, it binds directly to 16S rRNA central domain where it helps coordinate assembly of the platform of the 30S subunit. This chain is Small ribosomal subunit protein uS8, found in Psychromonas ingrahamii (strain DSM 17664 / CCUG 51855 / 37).